We begin with the raw amino-acid sequence, 339 residues long: tRNA (guanine-N(7)-)-methyltransferase (339 aa).

The tract at residues 1-20 (MTPPPAKRQKRNEYRKANTA) is disordered. S-adenosyl-L-methionine-binding positions include glycine 94 and 117-118 (EI). Residues 141-186 (RSSAIPSESSPAAQQPQQHHQQQLQATETAADAASPSSPDATGETL) are disordered. The segment covering 142-181 (SSAIPSESSPAAQQPQQHHQQQLQATETAADAASPSSPDA) has biased composition (low complexity). S-adenosyl-L-methionine-binding positions include 202 to 203 (NT) and cysteine 222. Residue aspartate 225 is part of the active site. 311–313 (TEE) provides a ligand contact to S-adenosyl-L-methionine.

This sequence belongs to the class I-like SAM-binding methyltransferase superfamily. TrmB family. In terms of assembly, forms a complex with trm82.

It localises to the nucleus. The catalysed reaction is guanosine(46) in tRNA + S-adenosyl-L-methionine = N(7)-methylguanosine(46) in tRNA + S-adenosyl-L-homocysteine. The protein operates within tRNA modification; N(7)-methylguanine-tRNA biosynthesis. Catalyzes the formation of N(7)-methylguanine at position 46 (m7G46) in tRNA. This chain is tRNA (guanine-N(7)-)-methyltransferase (trm8), found in Aspergillus clavatus (strain ATCC 1007 / CBS 513.65 / DSM 816 / NCTC 3887 / NRRL 1 / QM 1276 / 107).